The primary structure comprises 428 residues: Maltoporin (428 aa).

Positions 1–24 (MKSMRILPISLTIMAGLLSIEASA) are cleaved as a signal peptide.

This sequence belongs to the porin LamB (TC 1.B.3) family. Homotrimer formed of three 18-stranded antiparallel beta-barrels, containing three independent channels.

It is found in the cell outer membrane. It catalyses the reaction beta-maltose(in) = beta-maltose(out). Involved in the transport of maltose and maltodextrins. The sequence is that of Maltoporin from Photorhabdus laumondii subsp. laumondii (strain DSM 15139 / CIP 105565 / TT01) (Photorhabdus luminescens subsp. laumondii).